We begin with the raw amino-acid sequence, 179 residues long: ATP synthase subunit delta, chloroplastic (179 aa).

Belongs to the ATPase delta chain family. F-type ATPases have 2 components, F(1) - the catalytic core - and F(0) - the membrane proton channel. F(1) has five subunits: alpha(3), beta(3), gamma(1), delta(1), epsilon(1). CF(0) has four main subunits: a(1), b(1), b'(1) and c(10-14). The alpha and beta chains form an alternating ring which encloses part of the gamma chain. F(1) is attached to F(0) by a central stalk formed by the gamma and epsilon chains, while a peripheral stalk is formed by the delta, b and b' chains.

Its subcellular location is the plastid. The protein resides in the chloroplast thylakoid membrane. In terms of biological role, f(1)F(0) ATP synthase produces ATP from ADP in the presence of a proton or sodium gradient. F-type ATPases consist of two structural domains, F(1) containing the extramembraneous catalytic core and F(0) containing the membrane proton channel, linked together by a central stalk and a peripheral stalk. During catalysis, ATP synthesis in the catalytic domain of F(1) is coupled via a rotary mechanism of the central stalk subunits to proton translocation. Its function is as follows. This protein is part of the stalk that links CF(0) to CF(1). It either transmits conformational changes from CF(0) to CF(1) or is implicated in proton conduction. This is ATP synthase subunit delta, chloroplastic from Ochrosphaera neapolitana.